Here is a 354-residue protein sequence, read N- to C-terminus: 3'-5' exonuclease (354 aa).

The interval 1–120 (MERYLTKMPI…PSPEKEKPEK (120 aa)) is disordered. Over residues 13–50 (KANEVPKKEAFAKKETPKVARKATKTDTPKELKDKENA) the composition is skewed to basic and acidic residues. The segment covering 59 to 70 (TKGRPGRPAAKR) has biased composition (basic residues). Positions 71 to 91 (KNLDTPDVKDEKIAMEEENPP) are enriched in basic and acidic residues. Ser104, Ser110, and Ser112 each carry phosphoserine. The 166-residue stretch at 149–314 (WVEKQKDDVV…GQVIYRELER (166 aa)) folds into the 3'-5' exonuclease domain. Positions 163, 165, and 301 each coordinate Mg(2+).

This sequence belongs to the WRNexo family.

The protein localises to the nucleus. Functionally, has exonuclease activity on both single-stranded and duplex templates bearing overhangs, but not blunt ended duplex DNA, and cleaves in a 3'-5' direction. Essential for the formation of DNA replication focal centers. Has an important role in maintaining genome stability. The polypeptide is 3'-5' exonuclease (Drosophila sechellia (Fruit fly)).